A 203-amino-acid chain; its full sequence is DNA-directed RNA polymerase III subunit rpc8 (203 aa).

This sequence belongs to the eukaryotic RPB7/RPC8 RNA polymerase subunit family. Component of the RNA polymerase III (Pol III) complex consisting of 17 subunits. Rpc25/rpc8 and rpc17/rpc9 form a Pol III subcomplex.

Its subcellular location is the cytoplasm. It is found in the nucleus. DNA-dependent RNA polymerase catalyzes the transcription of DNA into RNA using the four ribonucleoside triphosphates as substrates. Specific peripheric component of RNA polymerase III which synthesizes small RNAs, such as 5S rRNA and tRNA. This is DNA-directed RNA polymerase III subunit rpc8 (rpc25) from Schizosaccharomyces pombe (strain 972 / ATCC 24843) (Fission yeast).